The primary structure comprises 436 residues: 3-ketoacyl-CoA thiolase (436 aa).

Cysteine 99 acts as the Acyl-thioester intermediate in catalysis. Residues histidine 392 and cysteine 422 each act as proton acceptor in the active site.

Belongs to the thiolase-like superfamily. Thiolase family. As to quaternary structure, heterotetramer of two alpha chains (FadJ) and two beta chains (FadI).

It is found in the cytoplasm. It catalyses the reaction an acyl-CoA + acetyl-CoA = a 3-oxoacyl-CoA + CoA. The protein operates within lipid metabolism; fatty acid beta-oxidation. Catalyzes the final step of fatty acid oxidation in which acetyl-CoA is released and the CoA ester of a fatty acid two carbons shorter is formed. The chain is 3-ketoacyl-CoA thiolase from Escherichia coli O8 (strain IAI1).